We begin with the raw amino-acid sequence, 86 residues long: Large ribosomal subunit protein bL31 (86 aa).

The Zn(2+) site is built by C16, C18, C38, and C41.

It belongs to the bacterial ribosomal protein bL31 family. Type A subfamily. As to quaternary structure, part of the 50S ribosomal subunit. Zn(2+) serves as cofactor.

In terms of biological role, binds the 23S rRNA. The polypeptide is Large ribosomal subunit protein bL31 (Acidothermus cellulolyticus (strain ATCC 43068 / DSM 8971 / 11B)).